The sequence spans 480 residues: Glutamyl-tRNA(Gln) amidotransferase subunit A (480 aa).

Residues Lys-76 and Ser-151 each act as charge relay system in the active site. Ser-175 serves as the catalytic Acyl-ester intermediate.

It belongs to the amidase family. GatA subfamily. Heterotrimer of A, B and C subunits.

The catalysed reaction is L-glutamyl-tRNA(Gln) + L-glutamine + ATP + H2O = L-glutaminyl-tRNA(Gln) + L-glutamate + ADP + phosphate + H(+). Its function is as follows. Allows the formation of correctly charged Gln-tRNA(Gln) through the transamidation of misacylated Glu-tRNA(Gln) in organisms which lack glutaminyl-tRNA synthetase. The reaction takes place in the presence of glutamine and ATP through an activated gamma-phospho-Glu-tRNA(Gln). This Exiguobacterium sp. (strain ATCC BAA-1283 / AT1b) protein is Glutamyl-tRNA(Gln) amidotransferase subunit A.